The chain runs to 420 residues: Phosphoglycerate kinase (420 aa).

(2R)-3-phosphoglycerate is bound by residues valine 26, aspartate 27, tyrosine 28, asparagine 29, glutamine 42, arginine 43, serine 66, histidine 67, glycine 69, arginine 70, leucine 125, arginine 126, histidine 173, and arginine 174. Position 199 is a phosphotyrosine (tyrosine 199). Serine 206 carries the post-translational modification Phosphoserine. A calmodulin binding region spans residues 209-228; sequence KPFLAILGGAKVSDKIKLIE. Residue glycine 217 participates in ADP binding. Glycine 217 contacts CDP. AMP contacts are provided by alanine 218 and lysine 219. Residue alanine 218 coordinates ATP. Alanine 218 is a binding site for Mg(2+). A CDP-binding site is contributed by aspartate 222. Aspartate 222 contributes to the Mg(2+) binding site. Residue lysine 223 participates in AMP binding. Lysine 223 is a binding site for ATP. Glycine 241 contributes to the ADP binding site. Glycine 241 serves as a coordination point for CDP. AMP-binding residues include glycine 242 and glycine 316. ATP-binding residues include glycine 242 and glycine 316. 2 residues coordinate CDP: glycine 341 and phenylalanine 346. Phenylalanine 346 is an ADP binding site. Residue glutamate 347 coordinates AMP. ATP contacts are provided by glutamate 347, aspartate 378, and threonine 379. Aspartate 378 contributes to the Mg(2+) binding site. At serine 393 the chain carries Phosphoserine.

This sequence belongs to the phosphoglycerate kinase family. In terms of assembly, monomer. Interacts with calmodulin in the presence of Ca(2+). The cofactor is Mg(2+).

It localises to the cytoplasm. The catalysed reaction is (2R)-3-phosphoglycerate + ATP = (2R)-3-phospho-glyceroyl phosphate + ADP. Its pathway is carbohydrate degradation; glycolysis; pyruvate from D-glyceraldehyde 3-phosphate: step 2/5. This chain is Phosphoglycerate kinase, found in Dictyostelium discoideum (Social amoeba).